A 74-amino-acid polypeptide reads, in one-letter code: MRTTLQIDDDVLEDARSIARSEGKSVGAVISELARRSLRPVGIVEVDGFPVFDVPPDAPTVTSEDVVRALEDDV.

Functionally, antitoxin component of a type II toxin-antitoxin (TA) system. The chain is Antitoxin VapB39 (vapB39) from Mycobacterium tuberculosis (strain CDC 1551 / Oshkosh).